The sequence spans 224 residues: Cerebellin-2 (224 aa).

A signal peptide spans 1-51 (MQAPGRGPLGLRLMMPGRRGALREPGGCGSCLGVALALLLLLLPACCPVRA). N-linked (GlcNAc...) asparagine glycans are attached at residues asparagine 53 and asparagine 110. Residues 88 to 224 (SGSAKVAFSA…TFSGFLVFPL (137 aa)) enclose the C1q domain.

Homohexamer; disulfide-linked homotrimers. The trimers are assembled via the globular C1q domains. The trimers associate via N-terminal cysteine residues to form disulfide-linked hexamers. May form homooligomers or heterooligomers with CBLN1 and CBLN3 prior to secretion. Once secreted, does not interact with other CBLN family members. Interacts with GRID2, and more weakly with GRID1. Interacts with NRXN1 and NRXN2 long and short isoforms produced by alternative promoter usage. Weakly interacts with NRXN3 short isoform and not at all with NRXN3 long isoform.

Its subcellular location is the secreted. Functionally, acts as a synaptic organizer in specific subsets of neurons in the brain. Essential for long-term maintenance but not establishment of excitatory synapses. Functions as part of a trans-synaptic complex by binding to postsynaptic GRID1 and presynaptic neurexins. This interaction helps regulate the activity of NMDA and AMPA receptors at hippocampal synapses without affecting synapse formation. NRXN1B-CBLN2-GRID1 complex transduce presynaptic signals into postsynaptic NMDAR response. NRXN3B-CBLN2-GRID1 complex transduce presynaptic signals into postsynaptic AMPAR response. The polypeptide is Cerebellin-2 (Homo sapiens (Human)).